The following is a 408-amino-acid chain: Eukaryotic initiation factor 4A-II (408 aa).

Residues 1–22 (MSGGSADYNSREHGGPEGMDPD) are disordered. The Q motif motif lies at 34–62 (DNFDDMNLKESLLRGIYAYGFEKPSAIQQ). The region spanning 65–236 (IIPCIKGYDV…KKFMRDPIRI (172 aa)) is the Helicase ATP-binding domain. 77–84 (QAQSGTGK) lines the ATP pocket. T160 is modified (phosphothreonine). Positions 183–186 (LDEA) match the DEAD box motif. Residues 247–408 (GIKQFYINVE…EMPMNVADLI (162 aa)) form the Helicase C-terminal domain.

Belongs to the DEAD box helicase family. eIF4A subfamily. In terms of assembly, eIF4F is a multi-subunit complex, the composition of which varies with external and internal environmental conditions. It is composed of at least EIF4A, EIF4E and EIF4G1/EIFFG3. Interacts with EIF4E. May interact with NOM1.

The enzyme catalyses ATP + H2O = ADP + phosphate + H(+). Functionally, ATP-dependent RNA helicase which is a subunit of the eIF4F complex involved in cap recognition and is required for mRNA binding to ribosome. In the current model of translation initiation, eIF4A unwinds RNA secondary structures in the 5'-UTR of mRNAs which is necessary to allow efficient binding of the small ribosomal subunit, and subsequent scanning for the initiator codon. This chain is Eukaryotic initiation factor 4A-II (EIF4A2), found in Macaca fascicularis (Crab-eating macaque).